The primary structure comprises 397 residues: Protein WRKY1 (397 aa).

A DNA-binding region (WRKY) is located at residues 326 to 392; the sequence is KVADIPADEF…YEGDHNHNRV (67 aa).

This sequence belongs to the WRKY group II-d family. Interacts with RS2. More abundant in apices and young leaf primordia than in fully expanded leaf tissues.

The protein localises to the nucleus. Transcription factor. Interacts specifically with the W box (5'-(T)TGAC[CT]-3'), a frequently occurring elicitor-responsive cis-acting element. This is Protein WRKY1 from Zea mays (Maize).